Consider the following 367-residue polypeptide: 3-isopropylmalate dehydrogenase (367 aa).

75 to 88 (GPKWDGIERSKRPE) provides a ligand contact to NAD(+). Positions 95, 105, 133, and 230 each coordinate substrate. Mg(2+) is bound by residues aspartate 230, aspartate 254, and aspartate 258. 288 to 300 (GSAPDIAGQDIAN) contacts NAD(+).

Belongs to the isocitrate and isopropylmalate dehydrogenases family. LeuB type 1 subfamily. As to quaternary structure, homodimer. Requires Mg(2+) as cofactor. The cofactor is Mn(2+).

The protein resides in the cytoplasm. The enzyme catalyses (2R,3S)-3-isopropylmalate + NAD(+) = 4-methyl-2-oxopentanoate + CO2 + NADH. Its pathway is amino-acid biosynthesis; L-leucine biosynthesis; L-leucine from 3-methyl-2-oxobutanoate: step 3/4. Functionally, catalyzes the oxidation of 3-carboxy-2-hydroxy-4-methylpentanoate (3-isopropylmalate) to 3-carboxy-4-methyl-2-oxopentanoate. The product decarboxylates to 4-methyl-2 oxopentanoate. In Psychrobacter cryohalolentis (strain ATCC BAA-1226 / DSM 17306 / VKM B-2378 / K5), this protein is 3-isopropylmalate dehydrogenase.